The primary structure comprises 1898 residues: 1-phosphatidylinositol 4,5-bisphosphate phosphodiesterase epsilon-1 (1898 aa).

The region spanning 66 to 328 is the Ras-GEF domain; it reads FPEEVAFQLS…EREQKEKEAK (263 aa). 2 disordered regions span residues 419 to 444 and 569 to 722; these read QPLD…GVGV and TNTN…GPSG. The segment covering 569–583 has biased composition (polar residues); that stretch reads TNTNATRPNDSSLSS. Residues 590–605 are compositionally biased toward basic residues; that stretch reads SRLKNLKNAMQKKLRG. 3 stretches are compositionally biased toward low complexity: residues 625–637, 666–687, and 701–716; these read PPSI…SQSG, YTPR…GGRS, and SGSI…QVSG. The 149-residue stretch at 910-1058 folds into the PI-PLC X-box domain; the sequence is EDLRYPLSHY…MKNKILIKNK (149 aa). Residues His925 and His970 contribute to the active site. 2 disordered regions span residues 1082–1178 and 1238–1274; these read QLNL…DRKT and EEGP…STQL. Over residues 1098 to 1123 the composition is skewed to acidic residues; sequence TVDEVEDDDLDEFLDDEENEEDDQEE. The span at 1124–1144 shows a compositional bias: basic and acidic residues; the sequence is VQVRSEKEDSPKTSKRAEKSA. Residues 1146 to 1155 are compositionally biased toward polar residues; it reads NIKQQDSLCS. 2 stretches are compositionally biased toward low complexity: residues 1163–1172 and 1242–1253; these read KPSTSKTTSK and ASASLSFSSRAR. The PI-PLC Y-box domain occupies 1279 to 1385; sequence AAEFLGSVRA…CGYQLKPRCL (107 aa). The region spanning 1391 to 1517 is the C2 domain; that stretch reads LLYNKFLPLS…PLRTPTNLPI (127 aa). The Ras-associating 1 domain maps to 1570 to 1665; that stretch reads QIFVLRITGA…RRFVLRKKGS (96 aa). Over residues 1680-1694 the composition is skewed to low complexity; that stretch reads GTSGSSTSVSPSPLT. Positions 1680–1711 are disordered; it reads GTSGSSTSVSPSPLTKDGHVKSASSNQLHGRS. Positions 1738–1857 constitute a Ras-associating 2 domain; sequence DTFLVCVHNV…GRFVLENRKD (120 aa).

As to quaternary structure, interacts (via Ras-associating domain 1) with let-60 (in GTP-bound form). It depends on Ca(2+) as a cofactor. Expressed in the spermatheca, vulva, intestine and excretory cells. Expressed in sensory neurons AWC, AFD, ASE, ASG and BAG, interneurons, ventral nerve cord neurons and tail neurons. Expressed in body muscles.

It catalyses the reaction a 1,2-diacyl-sn-glycero-3-phospho-(1D-myo-inositol-4,5-bisphosphate) + H2O = 1D-myo-inositol 1,4,5-trisphosphate + a 1,2-diacyl-sn-glycerol + H(+). Functionally, the production of the second messenger molecules diacylglycerol (DAG) and inositol 1,4,5-trisphosphate (IP3) is mediated by activated phosphatidylinositol-specific phospholipase C enzymes. plc-1 is a bifunctional enzyme which also regulates small GTPases of the Ras superfamily through its Ras guanine-exchange factor (RasGEF) activity. By activating IP3 receptor itr-1-mediated intracellular Ca(2+) release via the production of IP3, regulates ovulation by controlling contraction and/or dilation of the distal spermatheca valve during oocyte entry and the timing of the dilation of the spermatheca-uterine valve during oocyte exit. In a similar manner, plays an essential role in epidermal morphogenesis by regulating migration of epidermal cells during ventral closure and to a lesser extent by regulating epidermal cell dorsal intercalation. Involved in the immune response to S.aureus bacterium by activating kinase dkf-1 via the production of DAG which in turn activates transcription factor hlh-30. In ASER neurons, required for adjusting the orientation behavior in salt gradients based on the memory of previous salt concentration encountered. The chain is 1-phosphatidylinositol 4,5-bisphosphate phosphodiesterase epsilon-1 from Caenorhabditis elegans.